We begin with the raw amino-acid sequence, 295 residues long: GTP-binding protein GEM (295 aa).

The tract at residues 39–64 (CNLRNRHSTAPEEHCRRSWSSDSTDS) is disordered. Residues 81–88 (GEQGVGKS) and 190–193 (NKSD) each bind GTP. The interval 265–284 (ARRFWGKIVAKNNKNMAFKL) is calmodulin-binding.

The protein belongs to the small GTPase superfamily. RGK family. As to quaternary structure, interacts with calmodulin in a Ca(2+)-dependent manner. Calmodulin binding significantly decreases GTP binding. Binds ROCK1. Phosphorylated on tyrosine residues.

It is found in the cell membrane. Its function is as follows. Could be a regulatory protein, possibly participating in receptor-mediated signal transduction at the plasma membrane. Has guanine nucleotide-binding activity but undetectable intrinsic GTPase activity. In Mus musculus (Mouse), this protein is GTP-binding protein GEM (Gem).